The sequence spans 48 residues: Small polypeptide DEVIL 14 (48 aa).

Residues 4–23 traverse the membrane as a helical segment; the sequence is TVVLRCCTSVTKVRTWKRCS. The interval 17–48 is required for DVL/RTFL small polypeptide activity; it reads RTWKRCSKQIKEQRARLYIIWKCAVFLLSSHD.

Belongs to the DVL/RTFL small polypeptides family.

The protein resides in the cell membrane. Functionally, small polypeptide acting as a regulatory molecule which coordinates cellular responses required for differentiation, growth and development, probably by restricting polar cell proliferation in lateral organs and coordinating socket cell recruitment and differentiation at trichome sites. This is Small polypeptide DEVIL 14 from Arabidopsis thaliana (Mouse-ear cress).